A 504-amino-acid polypeptide reads, in one-letter code: MGSITESQEPLRFFATGDKHESASSARPPTYVQVLIVGAGFAGLMAALECWRKGHDVVGIVERNQGPNYSGDLIIIQPSALEIMKHWPQMRRELEEDKVTVGTYYYRHNGELVDGPAHPNYNAPEYVAEREARPGGFPYVGAVQIRKKFYRMLLRQVARLGFRVDYGQRVESYFEDDSAGVAGVRMTDGSIRKAHVVVAADGFRSRSELLIADEYLPTQSSGMSVYRTAFPAKLALADEAVRQRWGGKHTYEFWMGSGMHIGLYLSPELAAFGITPRDHLLAKDKVARESWDPDVSPDEVIDVLRRAKVPGDSIIHWPLRWRNLRREWVSPGGRVVQIGDAAHSTVPSSAAGGTLALEDAITLATSLQIASSPAAASGPGAGAGAGVPLGTRVYNLLRYERASCTQKMAFVNAQVLGDTTDWDAVRADPSKVRVRYPKWFFRHDPEGYVYEKYGQAFAHLVSGAEFHNTNIPPGHQFVHWTLEGIHREMAAGKKVEDLLDGDWT.

Arg-146 is an FAD binding site. The active site involves Arg-227. Asp-340 and Gly-353 together coordinate FAD.

It belongs to the paxM FAD-dependent monooxygenase family. It depends on FAD as a cofactor.

It participates in secondary metabolite biosynthesis. Its function is as follows. FAD-dependent monooxygenase; part of the gene cluster that mediates the biosynthesis of the tetrahydroxanthone dimer neosartorin, which exhibits antibacterial activity. The two different monomeric units appear to be synthesized by the same set of enzymes, among which the Baeyer-Villiger monooxygenase nsrF is the key enzyme for the divergence of the biosynthetic routes. The pathway begins with the synthesis of atrochrysone thioester by the polyketide synthase nsrB. The atrochrysone carboxyl ACP thioesterase nsrC then breaks the thioester bond and releases the atrochrysone carboxylic acid from AacuL. Atrochrysone carboxylic acid is decarboxylated by the decarboxylase nsrE, and oxidized by the anthrone oxygenase nsrD to yield emodin. Emodin is then reduced to emodin hydroquinone by the oxidoreductase nsrR. A-ring reduction by the short chain dehydrogenase nsrJ, dehydration by the scytalone dehydratase-like protein nsrI and probable spontaneous re-oxidation, results in overall deoxygenation to chrysophanol. The Baeyer-Villiger monooxygenase nsrF accepts chrysophanol as a substrate to insert one oxygen atom at two different positions to yield the precursors of both monomric units. NsrF is promiscuous/flexible in interacting with the 2 (non methylated and methylated) aromatic rings of chrysophanol, thus diverging the biosynthetic pathway at this point. After the hydrolysis of the lactones, methylesterification by the methyltransferase nsrG yields respectively moniliphenone and 2,2',6'-trihydroxy-4-methyl-6-methoxya-cyldiphenylmethanone. The next steps are the hydroxylation by the FAD-dependent monooxygenase nsrK, followed by isomerization by the monooxygenase nsrQ. The short chain dehydrogenase/reductase nsrO then catalyzes the C-5 ketoreduction to give the xanthone skeleton of blennolide C and 5-acetylblennolide A. The acetyltransferase nsrL has a strict substrate specificity and uses only blennolide A but not blennolide C to yield 5-acetylblennolide A as the single-acetylated product. In the final step of the biosynthesis, the heterodimerization of the 2 xanthones, blennolide C and 5-acetylblennolide A, is catalyzed by the cytochrome P450 monooxygenase nsrP. NsrP can utilize at least three different xanthones as its substrates to perform the dimerization reaction. This Aspergillus novofumigatus (strain IBT 16806) protein is FAD-dependent monooxygenase nsrK.